The chain runs to 801 residues: MNAPVTYSASCEQVIPELVNEACERIAPIWPLDRWIAVNPWWGSRTGPVEKVSRELDNLFGAGLLMPPAFYREAWDGGRIQRPHLEEAAREAGLKDDSQALLAQLSGAASNQPGFVSALGYTRRGQQEPPLEEVREEIGRACARYFDLRQNRWRVSGTKQDLYQFWLSQSGRSLARKASVEMLLKPDWQEAAATVARELPYSSRQLPLVIHHLLGHLLGWASWCRGVDWRAALGDPHESGTEHFCAQLATIWLIHEAHALINMTEAERESWQNRYVNAFDLAPASANEQALWIWHRAYELAWQSRFLDDIRSSERSSLAEPDPVAEVQAAFCIDVRSEVIRRQLEKVYPEIRTLGVAGFFGMPIVHHRHGPTDDEARLPGLLAPVYRYSETLGSPSEDRELDRKLDSREQVRESVRRAKYSSLSTFTLVETTGLAWAWKLVRDSLNRNSAKAEAVEPGRLHHCVDGYPLSDPERVNLAEGLLRAMSLTKGFASVLLLVGHGAHTDNNPNEAGLACGACGGKNGGVNARVAAELLNDRQVRAGLAERGIVMPESTIALAAEHCTITDRITIYGRDQVPDSHQRVFNTLVEKLEAAGQACRRERATSLGLNGKTDDDLLAELKRRTRNWAEVRPEWGLANNAGMVIGPRSLTRSLDLGGRCFLHDYDPSQDPSGEVLTLLMSAPMVVANWINLQYFGSVARPDIFGAGNKLLHSVVGGNLGVVEGNGVDLKIGLPLQSVFDGEHWRHEPMRLAVVVDAPAERIEAVIRGNADVRALVENRWLWLHRVEGDQTLRYDDGRWVTT.

4 residues coordinate Zn(2+): cysteine 332, aspartate 334, histidine 500, and cysteine 515.

This sequence belongs to the inorganic carbon transporter (TC 9.A.2) DabA family. As to quaternary structure, forms a complex with DabB. Zn(2+) serves as cofactor.

Its subcellular location is the cell inner membrane. Functionally, part of an energy-coupled inorganic carbon pump. The protein is Probable inorganic carbon transporter subunit DabA of Marinobacter nauticus (strain ATCC 700491 / DSM 11845 / VT8) (Marinobacter aquaeolei).